Here is a 171-residue protein sequence, read N- to C-terminus: Large ribosomal subunit protein bL9 (171 aa).

The protein belongs to the bacterial ribosomal protein bL9 family.

In terms of biological role, binds to the 23S rRNA. This is Large ribosomal subunit protein bL9 from Rickettsia akari (strain Hartford).